The chain runs to 557 residues: Formate--tetrahydrofolate ligase (557 aa).

Residue 67–74 coordinates ATP; that stretch reads TPAGEGKT.

This sequence belongs to the formate--tetrahydrofolate ligase family.

It catalyses the reaction (6S)-5,6,7,8-tetrahydrofolate + formate + ATP = (6R)-10-formyltetrahydrofolate + ADP + phosphate. Its pathway is one-carbon metabolism; tetrahydrofolate interconversion. The protein is Formate--tetrahydrofolate ligase of Cereibacter sphaeroides (strain ATCC 17029 / ATH 2.4.9) (Rhodobacter sphaeroides).